The primary structure comprises 172 residues: Large ribosomal subunit protein uL10 (172 aa).

The protein belongs to the universal ribosomal protein uL10 family. Part of the ribosomal stalk of the 50S ribosomal subunit. The N-terminus interacts with L11 and the large rRNA to form the base of the stalk. The C-terminus forms an elongated spine to which L12 dimers bind in a sequential fashion forming a multimeric L10(L12)X complex.

In terms of biological role, forms part of the ribosomal stalk, playing a central role in the interaction of the ribosome with GTP-bound translation factors. The protein is Large ribosomal subunit protein uL10 of Rhodopseudomonas palustris (strain BisB5).